Reading from the N-terminus, the 120-residue chain is Methylglyoxal synthase (120 aa).

The 120-residue stretch at 1 to 120 (MRIALIAHDN…TAEILVESVL (120 aa)) folds into the MGS-like domain. Substrate contacts are provided by residues His-8, Lys-12, and 54 to 55 (SG). Asp-60 functions as the Proton donor/acceptor in the catalytic mechanism. A substrate-binding site is contributed by His-87.

It belongs to the methylglyoxal synthase family.

The catalysed reaction is dihydroxyacetone phosphate = methylglyoxal + phosphate. Its function is as follows. Catalyzes the formation of methylglyoxal from dihydroxyacetone phosphate. This chain is Methylglyoxal synthase, found in Natranaerobius thermophilus (strain ATCC BAA-1301 / DSM 18059 / JW/NM-WN-LF).